The primary structure comprises 208 residues: 2-dehydro-3-deoxy-phosphogluconate aldolase (208 aa).

The active-site Proton acceptor is glutamate 41. Pyruvate-binding residues include arginine 45, threonine 68, and lysine 128. The active-site Schiff-base intermediate with substrate is lysine 128.

It belongs to the KHG/KDPG aldolase family. In terms of assembly, homotrimer.

Its subcellular location is the cytoplasm. The catalysed reaction is 2-dehydro-3-deoxy-6-phospho-D-gluconate = D-glyceraldehyde 3-phosphate + pyruvate. The protein operates within carbohydrate acid metabolism; 2-dehydro-3-deoxy-D-gluconate degradation; D-glyceraldehyde 3-phosphate and pyruvate from 2-dehydro-3-deoxy-D-gluconate: step 2/2. Its function is as follows. Involved in the degradation of glucose via the Entner-Doudoroff pathway. Catalyzes the reversible, stereospecific retro-aldol cleavage of 2-keto-3-deoxy-6-phosphogluconate (KDPG) to pyruvate and D-glyceraldehyde-3-phosphate. The protein is 2-dehydro-3-deoxy-phosphogluconate aldolase of Zymomonas mobilis subsp. mobilis (strain ATCC 31821 / ZM4 / CP4).